We begin with the raw amino-acid sequence, 964 residues long: Probable LRR receptor-like serine/threonine-protein kinase IRK (964 aa).

An N-terminal signal peptide occupies residues 1 to 20 (MYKALIFTVLLVSAVAPVRS). Over 21-603 (LDPPLNDDVL…GHKRILLSIS (583 aa)) the chain is Extracellular. 11 LRR repeats span residues 92–116 (LQFLHKLSLSNNNLTGIINPNMLLS), 117–141 (LVNLKVVDLSSNGLSGSLPDEFFRQ), 143–166 (GSLRVLSLAKNKLTGKIPVSISSC), 168–190 (SLAALNLSSNGFSGSMPLGIWSL), 191–214 (NTLRSLDLSRNELEGEFPEKIDRL), 215–238 (NNLRALDLSRNRLSGPIPSEIGSC), 240–261 (LLKTIDLSENSLSGSLPNTFQQ), 263–286 (SLCYSLNLGKNALEGEVPKWIGEM), 287–310 (RSLETLDLSMNKFSGQVPDSIGNL), 312–334 (ALKVLNFSGNGLIGSLPVSTANC), and 335–358 (INLLALDLSGNSLTGKLPMWLFQD). A glycan (N-linked (GlcNAc...) asparagine) is linked at asparagine 104. Asparagine 173 carries N-linked (GlcNAc...) asparagine glycosylation. N-linked (GlcNAc...) asparagine glycosylation is present at asparagine 317. Residue asparagine 370 is glycosylated (N-linked (GlcNAc...) asparagine). LRR repeat units follow at residues 375-399 (IKKIQVLDLSHNAFSGEIGAGLGDL), 400-423 (RDLEGLHLSRNSLTGPIPSTIGEL), 425-447 (HLSVLDVSHNQLNGMIPRETGGA), 448-471 (VSLEELRLENNLLEGNIPSSIKNC), 472-495 (SSLRSLILSHNKLLGSIPPELAKL), 496-519 (TRLEEVDLSFNELAGTLPKQLANL), and 521-544 (YLHTFNISHNHLFGELPAGGIFNG). An N-linked (GlcNAc...) asparagine glycan is attached at asparagine 470. 3 N-linked (GlcNAc...) asparagine glycosylation sites follow: asparagine 526, asparagine 562, and asparagine 578. Residues 604 to 624 (SLIAISAAAAIVVGVIAITVL) traverse the membrane as a helical segment. Residues 625-964 (NLRVRASTVS…SGSSDELGSS (340 aa)) are Cytoplasmic-facing. The region spanning 678-951 (LNKDCELGRG…GEAVNILRMI (274 aa)) is the Protein kinase domain. ATP contacts are provided by residues 684 to 692 (LGRGGFGAV) and lysine 706.

This sequence belongs to the protein kinase superfamily. Ser/Thr protein kinase family. Interacts with IRKI. Post-translationally, autophosphorylated. As to expression, highly expressed in root tips, shoot apices and developing flowers.

Its subcellular location is the cell membrane. The enzyme catalyses L-seryl-[protein] + ATP = O-phospho-L-seryl-[protein] + ADP + H(+). The catalysed reaction is L-threonyl-[protein] + ATP = O-phospho-L-threonyl-[protein] + ADP + H(+). The protein is Probable LRR receptor-like serine/threonine-protein kinase IRK of Arabidopsis thaliana (Mouse-ear cress).